We begin with the raw amino-acid sequence, 124 residues long: Small ribosomal subunit protein uS12 (124 aa).

A disordered region spans residues 1 to 28; that stretch reads MPTISQLVGSERKRLTKKTKSPALKSCP. Asp89 bears the 3-methylthioaspartic acid mark. The segment at 104-124 is disordered; sequence TAGVKDRRQSRSKYGAKAPKD.

This sequence belongs to the universal ribosomal protein uS12 family. As to quaternary structure, part of the 30S ribosomal subunit. Contacts proteins S8 and S17. May interact with IF1 in the 30S initiation complex.

Its function is as follows. With S4 and S5 plays an important role in translational accuracy. In terms of biological role, interacts with and stabilizes bases of the 16S rRNA that are involved in tRNA selection in the A site and with the mRNA backbone. Located at the interface of the 30S and 50S subunits, it traverses the body of the 30S subunit contacting proteins on the other side and probably holding the rRNA structure together. The combined cluster of proteins S8, S12 and S17 appears to hold together the shoulder and platform of the 30S subunit. The chain is Small ribosomal subunit protein uS12 from Prochlorococcus marinus (strain MIT 9301).